Consider the following 89-residue polypeptide: Small ribosomal subunit protein uS15 (89 aa).

It belongs to the universal ribosomal protein uS15 family. In terms of assembly, part of the 30S ribosomal subunit. Forms a bridge to the 50S subunit in the 70S ribosome, contacting the 23S rRNA.

Its function is as follows. One of the primary rRNA binding proteins, it binds directly to 16S rRNA where it helps nucleate assembly of the platform of the 30S subunit by binding and bridging several RNA helices of the 16S rRNA. Forms an intersubunit bridge (bridge B4) with the 23S rRNA of the 50S subunit in the ribosome. This chain is Small ribosomal subunit protein uS15, found in Baumannia cicadellinicola subsp. Homalodisca coagulata.